Here is a 241-residue protein sequence, read N- to C-terminus: MASLSGLASALESYRGRDRLIRVLGYCCQLVGGVLVEQCPARSEVGTRLLVVSTQLSHCRTILRLFDDLAMFVYTKQYGLGAQEEDAFVRCVSVLGNLADQLYYPCEHVAWAADARVLHVDSSRWWTLSTTLWALSLLLGVARSLWMLLKLRQRLRSPTAPFTSPLPRGKRRAMEAQMQSEALSLLSNLADLANAVHWLPRGVLWAGRFPPWLVGLMGTISSILSMYQAARAGGQAEATTP.

Topologically, residues 1–124 (MASLSGLASA…ARVLHVDSSR (124 aa)) are cytoplasmic. Residues 125-149 (WWTLSTTLWALSLLLGVARSLWMLL) traverse the membrane as a helical segment. Residues 150–211 (KLRQRLRSPT…GVLWAGRFPP (62 aa)) lie on the Lumenal side of the membrane. The chain crosses the membrane as a helical span at residues 212 to 227 (WLVGLMGTISSILSMY). Over 228 to 241 (QAARAGGQAEATTP) the chain is Cytoplasmic.

It belongs to the peroxin-11 family. As to quaternary structure, homodimer. Heterodimer with either PEX11A or PEX11B. Interacts with FIS1.

The protein resides in the peroxisome membrane. In terms of biological role, promotes membrane protrusion and elongation on the peroxisomal surface. This Homo sapiens (Human) protein is Peroxisomal membrane protein 11C (PEX11G).